The chain runs to 258 residues: Deoxyribose-phosphate aldolase (258 aa).

Asp102 serves as the catalytic Proton donor/acceptor. Residue Lys165 is the Schiff-base intermediate with acetaldehyde of the active site. The active-site Proton donor/acceptor is Lys199.

This sequence belongs to the DeoC/FbaB aldolase family. DeoC type 2 subfamily.

It localises to the cytoplasm. It catalyses the reaction 2-deoxy-D-ribose 5-phosphate = D-glyceraldehyde 3-phosphate + acetaldehyde. It functions in the pathway carbohydrate degradation; 2-deoxy-D-ribose 1-phosphate degradation; D-glyceraldehyde 3-phosphate and acetaldehyde from 2-deoxy-alpha-D-ribose 1-phosphate: step 2/2. Catalyzes a reversible aldol reaction between acetaldehyde and D-glyceraldehyde 3-phosphate to generate 2-deoxy-D-ribose 5-phosphate. The protein is Deoxyribose-phosphate aldolase of Vibrio vulnificus (strain CMCP6).